A 197-amino-acid chain; its full sequence is Peptide deformylase (197 aa).

Cysteine 106 and histidine 148 together coordinate Fe cation. Glutamate 149 is an active-site residue. Histidine 152 serves as a coordination point for Fe cation.

Belongs to the polypeptide deformylase family. It depends on Fe(2+) as a cofactor.

It carries out the reaction N-terminal N-formyl-L-methionyl-[peptide] + H2O = N-terminal L-methionyl-[peptide] + formate. In terms of biological role, removes the formyl group from the N-terminal Met of newly synthesized proteins. Requires at least a dipeptide for an efficient rate of reaction. N-terminal L-methionine is a prerequisite for activity but the enzyme has broad specificity at other positions. The chain is Peptide deformylase from Mycolicibacterium smegmatis (strain ATCC 700084 / mc(2)155) (Mycobacterium smegmatis).